Here is a 379-residue protein sequence, read N- to C-terminus: Anhydro-N-acetylmuramic acid kinase (379 aa).

9-16 (GTSADGVD) is a binding site for ATP.

It belongs to the anhydro-N-acetylmuramic acid kinase family.

The enzyme catalyses 1,6-anhydro-N-acetyl-beta-muramate + ATP + H2O = N-acetyl-D-muramate 6-phosphate + ADP + H(+). It participates in amino-sugar metabolism; 1,6-anhydro-N-acetylmuramate degradation. It functions in the pathway cell wall biogenesis; peptidoglycan recycling. In terms of biological role, catalyzes the specific phosphorylation of 1,6-anhydro-N-acetylmuramic acid (anhMurNAc) with the simultaneous cleavage of the 1,6-anhydro ring, generating MurNAc-6-P. Is required for the utilization of anhMurNAc either imported from the medium or derived from its own cell wall murein, and thus plays a role in cell wall recycling. The sequence is that of Anhydro-N-acetylmuramic acid kinase from Prochlorococcus marinus (strain MIT 9313).